Here is a 337-residue protein sequence, read N- to C-terminus: D-alanine--D-alanine ligase (337 aa).

An ATP-grasp domain is found at K124–N330. A154–E209 is a binding site for ATP. Residues D284, E297, and N299 each coordinate Mg(2+).

This sequence belongs to the D-alanine--D-alanine ligase family. Mg(2+) serves as cofactor. Requires Mn(2+) as cofactor.

It is found in the cytoplasm. It catalyses the reaction 2 D-alanine + ATP = D-alanyl-D-alanine + ADP + phosphate + H(+). Its pathway is cell wall biogenesis; peptidoglycan biosynthesis. Cell wall formation. The polypeptide is D-alanine--D-alanine ligase (Shewanella baltica (strain OS223)).